The primary structure comprises 548 residues: Glucan endo-1,3-beta-glucosidase (548 aa).

Positions 1-36 form a signal peptide, tat-type signal; that stretch reads MPHDRKNSSRRAWAALCAAVLAVSGALVGVAAPASA. Positions 38–396 constitute a GH64 domain; the sequence is PATIPLTITN…PQAAYIKLDP (359 aa). The active-site Proton donor is Glu153. Asp169 (proton acceptor) is an active-site residue. In terms of domain architecture, Ricin B-type lectin spans 422–548; the sequence is GTGALRIGST…NQTEAQRWTL (127 aa).

The protein belongs to the glycosyl hydrolase 64 family. In terms of processing, predicted to be exported by the Tat system. The position of the signal peptide cleavage has not been experimentally proven.

The protein resides in the periplasm. The enzyme catalyses Hydrolysis of (1-&gt;3)-beta-D-glucosidic linkages in (1-&gt;3)-beta-D-glucans.. Functionally, lysis of cellular walls containing beta-1,3-glucans. Implicated in the defense against fungal pathogens. The protein is Glucan endo-1,3-beta-glucosidase (glcI) of Arthrobacter sp. (strain YCWD3).